We begin with the raw amino-acid sequence, 153 residues long: Large ribosomal subunit protein uL13 (153 aa).

It belongs to the universal ribosomal protein uL13 family. As to quaternary structure, part of the 50S ribosomal subunit.

This protein is one of the early assembly proteins of the 50S ribosomal subunit, although it is not seen to bind rRNA by itself. It is important during the early stages of 50S assembly. This Methylobacterium sp. (strain 4-46) protein is Large ribosomal subunit protein uL13.